A 150-amino-acid polypeptide reads, in one-letter code: 3-hydroxyacyl-[acyl-carrier-protein] dehydratase FabZ (150 aa).

Histidine 54 is a catalytic residue.

The protein belongs to the thioester dehydratase family. FabZ subfamily.

The protein resides in the cytoplasm. It catalyses the reaction a (3R)-hydroxyacyl-[ACP] = a (2E)-enoyl-[ACP] + H2O. In terms of biological role, involved in unsaturated fatty acids biosynthesis. Catalyzes the dehydration of short chain beta-hydroxyacyl-ACPs and long chain saturated and unsaturated beta-hydroxyacyl-ACPs. The polypeptide is 3-hydroxyacyl-[acyl-carrier-protein] dehydratase FabZ (Psychromonas ingrahamii (strain DSM 17664 / CCUG 51855 / 37)).